The chain runs to 393 residues: GDP-mannose:cellobiosyl-diphosphopolyprenol alpha-mannosyltransferase (393 aa).

The protein belongs to the glycosyltransferase group 1 family. Glycosyltransferase 4 subfamily.

It catalyses the reaction beta-D-Glc-(1-&gt;4)-alpha-D-Glc-di-trans,octa-cis-undecaprenyl diphosphate + GDP-alpha-D-mannose = alpha-D-Man-(1-&gt;3)-beta-D-Glc-(1-&gt;4)-alpha-D-Glc-1-di-trans,octa-cis-undecaprenyl diphosphate + GDP + H(+). Functionally, involved in the biosynthesis of the exopolysaccharide acetan, a water-soluble polysaccharide involved in production of bacterial cellulose (BC). This chain is GDP-mannose:cellobiosyl-diphosphopolyprenol alpha-mannosyltransferase (aceC), found in Komagataeibacter xylinus (Gluconacetobacter xylinus).